The following is a 490-amino-acid chain: Aspartyl/glutamyl-tRNA(Asn/Gln) amidotransferase subunit B (490 aa).

This sequence belongs to the GatB/GatE family. GatB subfamily. Heterotrimer of A, B and C subunits.

It carries out the reaction L-glutamyl-tRNA(Gln) + L-glutamine + ATP + H2O = L-glutaminyl-tRNA(Gln) + L-glutamate + ADP + phosphate + H(+). The enzyme catalyses L-aspartyl-tRNA(Asn) + L-glutamine + ATP + H2O = L-asparaginyl-tRNA(Asn) + L-glutamate + ADP + phosphate + 2 H(+). Allows the formation of correctly charged Asn-tRNA(Asn) or Gln-tRNA(Gln) through the transamidation of misacylated Asp-tRNA(Asn) or Glu-tRNA(Gln) in organisms which lack either or both of asparaginyl-tRNA or glutaminyl-tRNA synthetases. The reaction takes place in the presence of glutamine and ATP through an activated phospho-Asp-tRNA(Asn) or phospho-Glu-tRNA(Gln). In Methylorubrum populi (strain ATCC BAA-705 / NCIMB 13946 / BJ001) (Methylobacterium populi), this protein is Aspartyl/glutamyl-tRNA(Asn/Gln) amidotransferase subunit B.